The chain runs to 429 residues: Enolase (429 aa).

Gln-163 provides a ligand contact to (2R)-2-phosphoglycerate. Residue Glu-205 is the Proton donor of the active site. Residues Asp-242, Glu-285, and Asp-312 each coordinate Mg(2+). Residues Lys-337, Arg-366, Ser-367, and Lys-388 each coordinate (2R)-2-phosphoglycerate. The active-site Proton acceptor is Lys-337.

This sequence belongs to the enolase family. The cofactor is Mg(2+).

Its subcellular location is the cytoplasm. The protein resides in the secreted. It localises to the cell surface. It carries out the reaction (2R)-2-phosphoglycerate = phosphoenolpyruvate + H2O. Its pathway is carbohydrate degradation; glycolysis; pyruvate from D-glyceraldehyde 3-phosphate: step 4/5. Its function is as follows. Catalyzes the reversible conversion of 2-phosphoglycerate (2-PG) into phosphoenolpyruvate (PEP). It is essential for the degradation of carbohydrates via glycolysis. This is Enolase from Methylorubrum extorquens (strain CM4 / NCIMB 13688) (Methylobacterium extorquens).